We begin with the raw amino-acid sequence, 69 residues long: Alternative ribosome-rescue factor A (69 aa).

This sequence belongs to the alternative ribosome-rescue factor A family. As to quaternary structure, interacts with the 70S ribosome and release factor 2.

Rescues ribosomes stalled at the 3' end of non-stop mRNAs. Recruits release factor 2 (RF2) to the stalled ribosome, helping position it correctly in the ribosomal A site so its GGQ motif can hydrolyze the peptidyl-tRNA bond. In Haemophilus influenzae (strain ATCC 51907 / DSM 11121 / KW20 / Rd), this protein is Alternative ribosome-rescue factor A (arfA).